We begin with the raw amino-acid sequence, 503 residues long: Probable folate-biopterin transporter 6 (503 aa).

The next 12 helical transmembrane spans lie at serine 56 to phenylalanine 76, leucine 101 to isoleucine 121, proline 128 to glycine 148, alanine 153 to isoleucine 173, leucine 194 to valine 214, glycine 221 to tyrosine 241, leucine 281 to tyrosine 301, phenylalanine 314 to histidine 334, asparagine 344 to isoleucine 364, leucine 369 to isoleucine 389, leucine 404 to glycine 424, and tryptophan 450 to valine 470.

This sequence belongs to the major facilitator superfamily. Folate-biopterin transporter (TC 2.A.71) family.

It localises to the membrane. Could mediate folate transport. The polypeptide is Probable folate-biopterin transporter 6 (Arabidopsis thaliana (Mouse-ear cress)).